We begin with the raw amino-acid sequence, 254 residues long: Hydroxyethylthiazole kinase (254 aa).

Position 40 (methionine 40) interacts with substrate. ATP-binding residues include arginine 116 and serine 162. Residue glycine 189 participates in substrate binding.

It belongs to the Thz kinase family. Requires Mg(2+) as cofactor.

The enzyme catalyses 5-(2-hydroxyethyl)-4-methylthiazole + ATP = 4-methyl-5-(2-phosphooxyethyl)-thiazole + ADP + H(+). It functions in the pathway cofactor biosynthesis; thiamine diphosphate biosynthesis; 4-methyl-5-(2-phosphoethyl)-thiazole from 5-(2-hydroxyethyl)-4-methylthiazole: step 1/1. Functionally, catalyzes the phosphorylation of the hydroxyl group of 4-methyl-5-beta-hydroxyethylthiazole (THZ). This Limosilactobacillus fermentum (strain NBRC 3956 / LMG 18251) (Lactobacillus fermentum) protein is Hydroxyethylthiazole kinase.